The sequence spans 501 residues: 2,3-bisphosphoglycerate-independent phosphoglycerate mutase (501 aa).

Mn(2+)-binding residues include aspartate 12 and serine 62. Serine 62 acts as the Phosphoserine intermediate in catalysis. Substrate-binding positions include histidine 121, 150-151 (RD), arginine 182, arginine 188, 253-256 (RSDR), and lysine 323. Residues aspartate 390, histidine 394, aspartate 431, histidine 432, and histidine 450 each contribute to the Mn(2+) site.

It belongs to the BPG-independent phosphoglycerate mutase family. Monomer. The cofactor is Mn(2+).

It catalyses the reaction (2R)-2-phosphoglycerate = (2R)-3-phosphoglycerate. It functions in the pathway carbohydrate degradation; glycolysis; pyruvate from D-glyceraldehyde 3-phosphate: step 3/5. Catalyzes the interconversion of 2-phosphoglycerate and 3-phosphoglycerate. The chain is 2,3-bisphosphoglycerate-independent phosphoglycerate mutase from Ehrlichia canis (strain Jake).